A 426-amino-acid chain; its full sequence is MPLLWLRGFLLASCWIIVKSSPTPGSEGHSAAPNCPSCALATLPKDVPNAQPEMVEAVKKHILNMLHLKKRPDVTQPVPKAALLNAIRKLHVGKVGENGYVEIEDDIGRRAEMNELMEQTSEIITFAESGTARKTLHFEISKEGSDLSVVERAEVWLFLKVPKANRTRSKVTIRLLQQQKHPQGSSDTREEAEEADLMEERSEQLISEKVVDARKSTWHIFPVSSSIQRLLDQGKSSLDIRIACDQCHETGASLVLLGKKKKKEEEGEGKKKDGGEAGAGVDEEKEQSHRPFLMLQARQSEDHPHRRRRRGLECDGKVNICCKKQFFVSFKDIGWNDWIIAPSGYHANYCEGECPSHIAGTSGSSLSFHSTVINQYRLRGHNPFANLKSCCVPTKLRPMSMLYYDDGQNIIKKDIQNMIVEECGCS.

The N-terminal stretch at 1–20 is a signal peptide; that stretch reads MPLLWLRGFLLASCWIIVKS. The propeptide occupies 21 to 310; that stretch reads SPTPGSEGHS…EDHPHRRRRR (290 aa). Asparagine 165 carries an N-linked (GlcNAc...) asparagine glycan. Polar residues predominate over residues 177 to 186; sequence QQQKHPQGSS. Disordered regions lie at residues 177–201 and 260–291; these read QQQK…MEER and KKKK…SHRP. Over residues 263 to 275 the composition is skewed to basic and acidic residues; that stretch reads KEEEGEGKKKDGG. Cystine bridges form between cysteine 314-cysteine 322, cysteine 321-cysteine 391, cysteine 350-cysteine 423, and cysteine 354-cysteine 425.

It belongs to the TGF-beta family. As to quaternary structure, dimeric, linked by one or more disulfide bonds. Inhibin A is a dimer of alpha/INHA and beta-A/INHBA. Activin A is a homodimer of beta-A/INHBA. Activin AB is a dimer of beta-A/INHBA and beta-B/INHBB. Interacts with FST and FSTL3; these interactions prevent activin A interaction to its type II receptor. Activin A interacts with ACVR2A. Activin A interacts with BMPR2. Inhibin A interacts with ACVR1; this interaction creates a non-signaling complex (NSC) that inhibits ACVR1-mediated BMP signaling. Inhibin A interacts with ACVR2A.

It localises to the secreted. In terms of biological role, inhibins/activins are involved in regulating a number of diverse functions such as hypothalamic and pituitary hormone secretion, gonadal hormone secretion, germ cell development and maturation, erythroid differentiation, insulin secretion, nerve cell survival, embryonic axial development or bone growth, depending on their subunit composition. Functionally, activin A is a homodimer of INHBA that plays a role in several essential biological processes including embryonic development, stem cell maintenance and differentiation, haematopoiesis, cell proliferation and tissue fibrosis. Signals through type I (such as ACVR1B or ACVR1C) and type II receptors (such as ACVR2A, ACVR2B or BMPR2) which, upon ligand binding, phosphorylate SMAD2 and SMAD3 intracellular signaling mediators that form a complex with SMAD4, translocate to the nucleus and modulate gene expression. Can also activate alternative non-canonical intracellular signaling pathways including the p38 MAPK, extracellular signal-regulated kinases 1/2 (ERK1/2) and c-Jun N-terminal kinases (JNKs) to modulate cell migration and differentiation. Alternatively, promotes osteoblastic differentiation via ACVRL1-SMAD1/5/9 pathway. In addition, can engage the type I receptor ACVR1 to form an ACVR1-activin A-type II receptor non-signaling complex (NSC) that renders receptors unavailable for engagement with BMPs, hence resulting in an apparent inhibition of ACVR1-mediated BMP signaling. Inhibin A is a dimer of alpha/INHA and beta-A/INHBA that functions as a feedback regulator in the hypothalamic-pituitary-gonadal (HPG) axis. Inhibits the secretion of FSH from the anterior pituitary gland by acting on pituitary gonadotrope cells. Antagonizes activin A by binding to the proteoglycan, betaglycan, and forming a stable complex with and, thereby, sequestering type II activin receptors while excluding type I receptor. This Equus caballus (Horse) protein is Inhibin beta A chain (INHBA).